Consider the following 508-residue polypeptide: D-alanine--D-alanyl carrier protein ligase (508 aa).

An ATP-binding site is contributed by 152–153; that stretch reads TS. Aspartate 198 lines the D-alanine pocket. 293–298 lines the ATP pocket; it reads NTYGPT. Valine 302 serves as a coordination point for D-alanine. ATP-binding positions include aspartate 384, 396-399, and lysine 495; that span reads YRGR. Lysine 495 contributes to the D-alanine binding site.

It belongs to the ATP-dependent AMP-binding enzyme family. DltA subfamily.

Its subcellular location is the cytoplasm. The enzyme catalyses holo-[D-alanyl-carrier protein] + D-alanine + ATP = D-alanyl-[D-alanyl-carrier protein] + AMP + diphosphate. It participates in cell wall biogenesis; lipoteichoic acid biosynthesis. Its function is as follows. Catalyzes the first step in the D-alanylation of lipoteichoic acid (LTA), the activation of D-alanine and its transfer onto the D-alanyl carrier protein (Dcp) DltC. In an ATP-dependent two-step reaction, forms a high energy D-alanyl-AMP intermediate, followed by transfer of the D-alanyl residue as a thiol ester to the phosphopantheinyl prosthetic group of the Dcp. D-alanylation of LTA plays an important role in modulating the properties of the cell wall in Gram-positive bacteria, influencing the net charge of the cell wall. The polypeptide is D-alanine--D-alanyl carrier protein ligase (Lactiplantibacillus plantarum (strain ATCC BAA-793 / NCIMB 8826 / WCFS1) (Lactobacillus plantarum)).